A 147-amino-acid chain; its full sequence is Proteinase inhibitor type-2 (147 aa).

The N-terminal stretch at 1-25 (MAVHKEVSFVAYLLIVLGMFLYVDA) is a signal peptide. Tandem repeats lie at residues 25-81 (ALGC…DPKN) and 82-141 (PKAC…DEPK). Intrachain disulfides connect Cys-28–Cys-116, Cys-32–Cys-112, Cys-40–Cys-122, Cys-52–Cys-89, Cys-55–Cys-73, Cys-56–Cys-85, Cys-62–Cys-98, and Cys-115–Cys-133.

This sequence belongs to the protease inhibitor I20 (potato type II proteinase inhibitor) family.

In Solanum tuberosum (Potato), this protein is Proteinase inhibitor type-2.